Reading from the N-terminus, the 533-residue chain is Zinc finger protein 26 (533 aa).

In terms of domain architecture, KRAB spans 14–85; the sequence is LSFKDISMEF…NAKISRQSCP (72 aa). C2H2-type zinc fingers lie at residues 174 to 196, 202 to 224, 230 to 252, 258 to 280, 286 to 308, 314 to 336, 342 to 364, 370 to 392, 398 to 420, 426 to 448, 454 to 476, 482 to 504, and 510 to 532; these read CVCS…LRIH, YECS…QRVH, YSCS…QEIH, YGCS…QRSH, YECS…QRTH, HKCS…IRMH, YQCS…QGVH, YQCG…LRAH, YGCS…RRTH, YECN…QKTH, FKCS…QRVH, and WKCS…RKTH.

The protein belongs to the krueppel C2H2-type zinc-finger protein family.

It is found in the nucleus. Its function is as follows. May be involved in transcriptional regulation. In Homo sapiens (Human), this protein is Zinc finger protein 26 (ZNF26).